The following is a 106-amino-acid chain: UPF0145 protein CPF_0876 (106 aa).

The protein belongs to the UPF0145 family.

The polypeptide is UPF0145 protein CPF_0876 (Clostridium perfringens (strain ATCC 13124 / DSM 756 / JCM 1290 / NCIMB 6125 / NCTC 8237 / Type A)).